Reading from the N-terminus, the 43-residue chain is Cytochrome b559 subunit beta (43 aa).

Residues 18–34 traverse the membrane as a helical segment; sequence WLAIHGLAIPTVFFFGA. Histidine 22 lines the heme pocket.

Belongs to the PsbE/PsbF family. In terms of assembly, heterodimer of an alpha subunit and a beta subunit. PSII is composed of 1 copy each of membrane proteins PsbA, PsbB, PsbC, PsbD, PsbE, PsbF, PsbH, PsbI, PsbJ, PsbK, PsbL, PsbM, PsbT, PsbY, PsbZ, Psb30/Ycf12, at least 3 peripheral proteins of the oxygen-evolving complex and a large number of cofactors. It forms dimeric complexes. Heme b serves as cofactor.

Its subcellular location is the plastid. The protein localises to the chloroplast thylakoid membrane. In terms of biological role, this b-type cytochrome is tightly associated with the reaction center of photosystem II (PSII). PSII is a light-driven water:plastoquinone oxidoreductase that uses light energy to abstract electrons from H(2)O, generating O(2) and a proton gradient subsequently used for ATP formation. It consists of a core antenna complex that captures photons, and an electron transfer chain that converts photonic excitation into a charge separation. This Cyanidium caldarium (Red alga) protein is Cytochrome b559 subunit beta.